A 264-amino-acid chain; its full sequence is Indole-3-glycerol phosphate synthase (264 aa).

This sequence belongs to the TrpC family.

The enzyme catalyses 1-(2-carboxyphenylamino)-1-deoxy-D-ribulose 5-phosphate + H(+) = (1S,2R)-1-C-(indol-3-yl)glycerol 3-phosphate + CO2 + H2O. The protein operates within amino-acid biosynthesis; L-tryptophan biosynthesis; L-tryptophan from chorismate: step 4/5. In Stenotrophomonas maltophilia (strain R551-3), this protein is Indole-3-glycerol phosphate synthase.